A 1024-amino-acid polypeptide reads, in one-letter code: Carbamoyl phosphate synthase large chain (1024 aa).

Residues 1–402 (MPKRTDLQTI…SLQKALRSTE (402 aa)) form a carboxyphosphate synthetic domain region. The ATP site is built by R129, R169, G175, G176, E208, I210, E215, G241, V242, H243, Q285, and E299. The 196-residue stretch at 133-328 (QAAMKKIGVE…IAKIAALLAV (196 aa)) folds into the ATP-grasp 1 domain. Mg(2+) is bound by residues Q285, E299, and N301. Residues Q285, E299, and N301 each coordinate Mn(2+). Residues 403-546 (GDIRGVYAEM…YSTYEWEDEV (144 aa)) are oligomerization domain. A carbamoyl phosphate synthetic domain region spans residues 547–929 (APTDKPKVVI…AFYRAQLGAK (383 aa)). The ATP-grasp 2 domain maps to 671–863 (NALCERLGLP…LAKSAARIAA (193 aa)). Residues R707, Q747, L749, E754, G779, V780, H781, S782, Q822, and E834 each coordinate ATP. The Mg(2+) site is built by Q822, E834, and N836. Mn(2+) is bound by residues Q822, E834, and N836. Residues 930–1024 (NYLPLEGTAL…GVRSLQEWVK (95 aa)) enclose the MGS-like domain. Positions 930–1024 (NYLPLEGTAL…GVRSLQEWVK (95 aa)) are allosteric domain.

The protein belongs to the CarB family. As to quaternary structure, composed of two chains; the small (or glutamine) chain promotes the hydrolysis of glutamine to ammonia, which is used by the large (or ammonia) chain to synthesize carbamoyl phosphate. Tetramer of heterodimers (alpha,beta)4. Mg(2+) is required as a cofactor. The cofactor is Mn(2+).

The enzyme catalyses hydrogencarbonate + L-glutamine + 2 ATP + H2O = carbamoyl phosphate + L-glutamate + 2 ADP + phosphate + 2 H(+). It catalyses the reaction hydrogencarbonate + NH4(+) + 2 ATP = carbamoyl phosphate + 2 ADP + phosphate + 2 H(+). Its pathway is amino-acid biosynthesis; L-arginine biosynthesis; carbamoyl phosphate from bicarbonate: step 1/1. It participates in pyrimidine metabolism; UMP biosynthesis via de novo pathway; (S)-dihydroorotate from bicarbonate: step 1/3. Large subunit of the glutamine-dependent carbamoyl phosphate synthetase (CPSase). CPSase catalyzes the formation of carbamoyl phosphate from the ammonia moiety of glutamine, carbonate, and phosphate donated by ATP, constituting the first step of 2 biosynthetic pathways, one leading to arginine and/or urea and the other to pyrimidine nucleotides. The large subunit (synthetase) binds the substrates ammonia (free or transferred from glutamine from the small subunit), hydrogencarbonate and ATP and carries out an ATP-coupled ligase reaction, activating hydrogencarbonate by forming carboxy phosphate which reacts with ammonia to form carbamoyl phosphate. The sequence is that of Carbamoyl phosphate synthase large chain from Deinococcus radiodurans (strain ATCC 13939 / DSM 20539 / JCM 16871 / CCUG 27074 / LMG 4051 / NBRC 15346 / NCIMB 9279 / VKM B-1422 / R1).